Consider the following 427-residue polypeptide: Ectoine TRAP transporter large permease protein TeaC (427 aa).

12 consecutive transmembrane segments (helical) span residues 13 to 35, 49 to 69, 79 to 99, 103 to 123, 147 to 167, 172 to 192, 216 to 236, 237 to 257, 273 to 293, 320 to 340, 356 to 376, and 400 to 420; these read LLLG…FMMF, MAGI…AADI, LINM…VSTA, TLFG…GSPL, IAFL…SGTS, FIAG…YCVI, LALW…GGIF, SPTE…FVVF, GLIT…SWII, ICVA…ILVL, VLVG…PPFG, and FIFM…IALF.

It belongs to the TRAP transporter large permease family. In terms of assembly, the complex comprises the extracytoplasmic solute receptor protein TeaA, and the two transmembrane proteins TeaB and TeaC.

The protein resides in the cell inner membrane. Part of the tripartite ATP-independent periplasmic (TRAP) transport system TeaABC involved in the uptake of ectoine and hydroxyectoine in response to osmotic upshock. Probably functions as a recovery system for synthesized ectoine that leaks out of the cell. In Halomonas elongata (strain ATCC 33173 / DSM 2581 / NBRC 15536 / NCIMB 2198 / 1H9), this protein is Ectoine TRAP transporter large permease protein TeaC (teaC).